The following is a 425-amino-acid chain: Protein CLP1 homolog (425 aa).

Residues glutamate 18, lysine 59, and 121 to 126 (DVGKST) contribute to the ATP site.

This sequence belongs to the Clp1 family. Clp1 subfamily.

It localises to the nucleus. Functionally, required for endonucleolytic cleavage during polyadenylation-dependent pre-mRNA 3'-end formation. The chain is Protein CLP1 homolog (cbc) from Drosophila grimshawi (Hawaiian fruit fly).